A 296-amino-acid chain; its full sequence is Trimeric intracellular cation channel type A (296 aa).

Residues 1–19 lie on the Lumenal side of the membrane; sequence MELPGALQLGELAAAFASV. Residues 20-37 form a helical membrane-spanning segment; the sequence is PVFPLFDAAYFIVSVLYL. The Cytoplasmic segment spans residues 38 to 51; that stretch reads KYEPGAVEMSRKSP. Residues 52–73 form a helical membrane-spanning segment; it reads FASWLCAMLHCFGSYILADLLL. Residue glycine 74 coordinates Ca(2+). Residues 74-85 lie on the Lumenal side of the membrane; it reads GESPIHYFSNNS. A helical transmembrane segment spans residues 86 to 103; that stretch reads SVILATAVWYLIFFCPMN. Over 104–107 the chain is Cytoplasmic; it reads LFYK. The chain crosses the membrane as a helical span at residues 108–126; sequence CVSFLPVKLIFVAMKEVVR. Residues lysine 122 and arginine 126 each coordinate a 1,2-diacyl-sn-glycero-3-phospho-(1D-myo-inositol-4,5-bisphosphate). The Lumenal portion of the chain corresponds to 127–144; that stretch reads VRKIAAGVHHAHHQYHHG. A helical membrane pass occupies residues 145 to 162; the sequence is WFIMMATGWVKGSGVALM. Topologically, residues 163 to 183 are cytoplasmic; sequence SNFEQLLRGVWRPETNEILHM. The chain crosses the membrane as a helical span at residues 184–201; it reads SFPTKASLYGTVLFTLQQ. Residues 202–209 are Lumenal-facing; it reads THWLPVSE. The chain crosses the membrane as a helical span at residues 210–230; sequence ANLVFFFTMFMIVCKVFMTAT. Topologically, residues 231-273 are cytoplasmic; sequence HSHASPFAPVEGFICPVFFGSVSSGHTSHHNQHGHSHEASYQP. Residues 256–296 are disordered; the sequence is HTSHHNQHGHSHEASYQPPPPVKSKEELNEGTRKRKAKKAE. Over residues 278-287 the composition is skewed to basic and acidic residues; that stretch reads KSKEELNEGT.

The protein belongs to the TMEM38 family. Homotrimer; conformation seems to be controled by binding to diacylglycerol (DAG).

It is found in the sarcoplasmic reticulum membrane. Its subcellular location is the nucleus membrane. The enzyme catalyses K(+)(in) = K(+)(out). Its activity is regulated as follows. Channel activity is activated by a change of voltage within the sarcoplasmic reticulum lumen and blocked by luminal high Ca(2+) levels. In terms of biological role, intracellular monovalent cation channel required for maintenance of rapid intracellular calcium release. Acts as a potassium counter-ion channel that functions in synchronization with calcium release from intracellular stores. Opened by a change of voltage within the sarcoplasmic reticulum lumen. The polypeptide is Trimeric intracellular cation channel type A (TMEM38A) (Gallus gallus (Chicken)).